The following is a 139-amino-acid chain: Large ribosomal subunit protein uL16 (139 aa).

A compositionally biased stretch (basic residues) spans 1 to 16; it reads MLIPKRTKYRKQHRPV. The segment at 1–22 is disordered; it reads MLIPKRTKYRKQHRPVRSGMSK.

This sequence belongs to the universal ribosomal protein uL16 family. In terms of assembly, part of the 50S ribosomal subunit.

Binds 23S rRNA and is also seen to make contacts with the A and possibly P site tRNAs. The protein is Large ribosomal subunit protein uL16 of Bifidobacterium longum (strain DJO10A).